The primary structure comprises 423 residues: TPR repeat-containing protein YpiA (423 aa).

TPR repeat units follow at residues 33 to 66 (DEDK…YPNE), 67 to 100 (TELT…DPSY), 135 to 168 (PVID…QSEI), 171 to 204 (VNVH…NPDP), 238 to 271 (TSLY…DEYN), 272 to 305 (KELF…DPGF), 306 to 339 (VEAL…GEED), 340 to 373 (PKYN…YRED), and 374 to 407 (RDFL…DGAN).

Interacts with the RNA polymerase core.

The sequence is that of TPR repeat-containing protein YpiA (ypiA) from Bacillus subtilis (strain 168).